Consider the following 326-residue polypeptide: Fructokinase (326 aa).

Residues 275–326 are disordered; it reads EQALRNGPDPRRQSRRRHRLPRRRQSTLGARDWSLRLEQDSDPHPPDDTFSP. Positions 287–299 are enriched in basic residues; sequence QSRRRHRLPRRRQ. The span at 307–326 shows a compositional bias: basic and acidic residues; the sequence is WSLRLEQDSDPHPPDDTFSP.

This sequence belongs to the carbohydrate kinase PfkB family.

It catalyses the reaction D-fructose + ATP = D-fructose 6-phosphate + ADP + H(+). This is Fructokinase (frk) from Rhizobium leguminosarum bv. trifolii.